The following is a 252-amino-acid chain: Receptor expression-enhancing protein 3-B (252 aa).

Transmembrane regions (helical) follow at residues M1–Y21, Y35–A55, and L57–L77. The disordered stretch occupies residues E163–S225. Residues R198–V211 show a composition bias toward acidic residues.

Belongs to the DP1 family.

The protein resides in the endoplasmic reticulum membrane. Its function is as follows. Microtubule-binding protein required to ensure proper cell division and nuclear envelope reassembly by sequestering the endoplasmic reticulum away from chromosomes during mitosis. Probably acts by clearing the endoplasmic reticulum membrane from metaphase chromosomes. The protein is Receptor expression-enhancing protein 3-B (reep3-b) of Xenopus laevis (African clawed frog).